We begin with the raw amino-acid sequence, 265 residues long: Glutamate racemase (265 aa).

Residues 13 to 14 (DS) and 45 to 46 (YG) each bind substrate. Catalysis depends on Cys77, which acts as the Proton donor/acceptor. 78 to 79 (NT) lines the substrate pocket. The active-site Proton donor/acceptor is the Cys185. 186–187 (TH) provides a ligand contact to substrate.

Belongs to the aspartate/glutamate racemases family.

It carries out the reaction L-glutamate = D-glutamate. It participates in cell wall biogenesis; peptidoglycan biosynthesis. In terms of biological role, provides the (R)-glutamate required for cell wall biosynthesis. This Vibrio cholerae serotype O1 (strain ATCC 39315 / El Tor Inaba N16961) protein is Glutamate racemase.